A 633-amino-acid polypeptide reads, in one-letter code: Threonine--tRNA ligase (633 aa).

The region spanning 1–61 (MINIHFSNNL…IENCTFEVIT (61 aa)) is the TGS domain. Residues 242–533 (DHRKIGRELE…LIEHHSGKFP (292 aa)) form a catalytic region. Zn(2+) contacts are provided by C333, H384, and H510.

This sequence belongs to the class-II aminoacyl-tRNA synthetase family. As to quaternary structure, homodimer. Requires Zn(2+) as cofactor.

It localises to the cytoplasm. It catalyses the reaction tRNA(Thr) + L-threonine + ATP = L-threonyl-tRNA(Thr) + AMP + diphosphate + H(+). Its function is as follows. Catalyzes the attachment of threonine to tRNA(Thr) in a two-step reaction: L-threonine is first activated by ATP to form Thr-AMP and then transferred to the acceptor end of tRNA(Thr). Also edits incorrectly charged L-seryl-tRNA(Thr). The polypeptide is Threonine--tRNA ligase (Ehrlichia chaffeensis (strain ATCC CRL-10679 / Arkansas)).